The sequence spans 228 residues: GrpE protein homolog, mitochondrial (228 aa).

The segment covering 46–57 (DEAKSEESKENN) has biased composition (basic and acidic residues). The segment at 46-66 (DEAKSEESKENNEDLTEEQSE) is disordered.

The protein belongs to the GrpE family. Component of the PAM complex, at least composed of SSC1 (mtHsp70), MGE1, TIM44, PAM16/TIM16, PAM17 and PAM18/TIM14. Interacts with SSQ1. In terms of processing, the N-terminus is blocked.

It localises to the mitochondrion matrix. Essential component of the PAM complex, a complex required for the translocation of transit peptide-containing proteins from the inner membrane into the mitochondrial matrix in an ATP-dependent manner. Seems to control the nucleotide-dependent binding of SSC1 to substrate proteins and the association of SSC1 with TIM44. The polypeptide is GrpE protein homolog, mitochondrial (MGE1) (Saccharomyces cerevisiae (strain ATCC 204508 / S288c) (Baker's yeast)).